A 90-amino-acid chain; its full sequence is Major envelope protein (90 aa).

A helical membrane pass occupies residues 53-70 (AVSVVSWAVAAGLIGELI).

Its subcellular location is the virion membrane. Its function is as follows. Essential for membrane formation. This is Major envelope protein (P9) from Pseudomonas savastanoi pv. phaseolicola (Pseudomonas syringae pv. phaseolicola).